Consider the following 322-residue polypeptide: Acetyl-coenzyme A carboxylase carboxyl transferase subunit alpha (322 aa).

The 255-residue stretch at 39–293 (RLAAKSQQLT…KRALAESLRQ (255 aa)) folds into the CoA carboxyltransferase C-terminal domain.

This sequence belongs to the AccA family. As to quaternary structure, acetyl-CoA carboxylase is a heterohexamer composed of biotin carboxyl carrier protein (AccB), biotin carboxylase (AccC) and two subunits each of ACCase subunit alpha (AccA) and ACCase subunit beta (AccD).

Its subcellular location is the cytoplasm. The enzyme catalyses N(6)-carboxybiotinyl-L-lysyl-[protein] + acetyl-CoA = N(6)-biotinyl-L-lysyl-[protein] + malonyl-CoA. Its pathway is lipid metabolism; malonyl-CoA biosynthesis; malonyl-CoA from acetyl-CoA: step 1/1. Functionally, component of the acetyl coenzyme A carboxylase (ACC) complex. First, biotin carboxylase catalyzes the carboxylation of biotin on its carrier protein (BCCP) and then the CO(2) group is transferred by the carboxyltransferase to acetyl-CoA to form malonyl-CoA. The protein is Acetyl-coenzyme A carboxylase carboxyl transferase subunit alpha of Ralstonia nicotianae (strain ATCC BAA-1114 / GMI1000) (Ralstonia solanacearum).